The sequence spans 299 residues: Apolipoprotein E (299 aa).

Positions M1 to A18 are cleaved as a signal peptide. 7 consecutive repeat copies span residues L74 to A95, P96 to G117, A118 to G139, Q140 to L161, R162 to E183, R184 to A205, and G224 to E245. The 8 X 22 AA approximate tandem repeats stretch occupies residues L74–E245. Residue M137 is modified to Methionine sulfoxide. S141 carries the phosphoserine modification. An LDL and other lipoprotein receptors binding region spans residues H152–R162. M156 to R159 contributes to the heparin binding site. Residues S204–M273 are lipid-binding and lipoprotein association. G219 to L226 serves as a coordination point for heparin. The segment at R261–M273 is specificity for association with VLDL.

The protein belongs to the apolipoprotein A1/A4/E family. Homotetramer. May interact with ABCA1; functionally associated with ABCA1 in the biogenesis of HDLs. May interact with APP/A4 amyloid-beta peptide; the interaction is extremely stable in vitro but its physiological significance is unclear. May interact with MAPT. May interact with MAP2. In the cerebrospinal fluid, interacts with secreted SORL1. Interacts with PMEL; this allows the loading of PMEL luminal fragment on ILVs to induce fibril nucleation. In terms of processing, APOE exists as multiple glycosylated and sialylated glycoforms within cells and in plasma. The extent of glycosylation and sialylation are tissue and context specific. Glycated in plasma VLDL. Post-translationally, phosphorylated by FAM20C in the extracellular medium.

It localises to the secreted. Its subcellular location is the extracellular space. The protein localises to the extracellular matrix. The protein resides in the extracellular vesicle. It is found in the endosome. It localises to the multivesicular body. Functionally, APOE is an apolipoprotein, a protein associating with lipid particles, that mainly functions in lipoprotein-mediated lipid transport between organs via the plasma and interstitial fluids. APOE is a core component of plasma lipoproteins and is involved in their production, conversion and clearance. Apolipoproteins are amphipathic molecules that interact both with lipids of the lipoprotein particle core and the aqueous environment of the plasma. As such, APOE associates with chylomicrons, chylomicron remnants, very low density lipoproteins (VLDL) and intermediate density lipoproteins (IDL) but shows a preferential binding to high-density lipoproteins (HDL). It also binds a wide range of cellular receptors including the LDL receptor/LDLR, the LDL receptor-related proteins LRP1, LRP2 and LRP8 and the very low-density lipoprotein receptor/VLDLR that mediate the cellular uptake of the APOE-containing lipoprotein particles. Finally, APOE also has a heparin-binding activity and binds heparan-sulfate proteoglycans on the surface of cells, a property that supports the capture and the receptor-mediated uptake of APOE-containing lipoproteins by cells. A main function of APOE is to mediate lipoprotein clearance through the uptake of chylomicrons, VLDLs, and HDLs by hepatocytes. APOE is also involved in the biosynthesis by the liver of VLDLs as well as their uptake by peripheral tissues ensuring the delivery of triglycerides and energy storage in muscle, heart and adipose tissues. By participating in the lipoprotein-mediated distribution of lipids among tissues, APOE plays a critical role in plasma and tissues lipid homeostasis. APOE is also involved in two steps of reverse cholesterol transport, the HDLs-mediated transport of cholesterol from peripheral tissues to the liver, and thereby plays an important role in cholesterol homeostasis. First, it is functionally associated with ABCA1 in the biogenesis of HDLs in tissues. Second, it is enriched in circulating HDLs and mediates their uptake by hepatocytes. APOE also plays an important role in lipid transport in the central nervous system, regulating neuron survival and sprouting. The sequence is that of Apolipoprotein E (APOE) from Erethizon dorsatum (North American porcupine).